A 363-amino-acid chain; its full sequence is NAD(P)H-quinone oxidoreductase subunit 1, chloroplastic (363 aa).

Helical transmembrane passes span 28-48 (WVFV…LAIV), 98-118 (FSFG…VIPF), 129-149 (IGVF…LMSG), 253-273 (FGLF…FVTV), 300-320 (VFVT…FIFV), and 336-356 (LLNL…LLTT).

This sequence belongs to the complex I subunit 1 family. As to quaternary structure, NDH is composed of at least 16 different subunits, 5 of which are encoded in the nucleus.

It is found in the plastid. The protein resides in the chloroplast thylakoid membrane. It catalyses the reaction a plastoquinone + NADH + (n+1) H(+)(in) = a plastoquinol + NAD(+) + n H(+)(out). The enzyme catalyses a plastoquinone + NADPH + (n+1) H(+)(in) = a plastoquinol + NADP(+) + n H(+)(out). Functionally, NDH shuttles electrons from NAD(P)H:plastoquinone, via FMN and iron-sulfur (Fe-S) centers, to quinones in the photosynthetic chain and possibly in a chloroplast respiratory chain. The immediate electron acceptor for the enzyme in this species is believed to be plastoquinone. Couples the redox reaction to proton translocation, and thus conserves the redox energy in a proton gradient. This chain is NAD(P)H-quinone oxidoreductase subunit 1, chloroplastic, found in Phaseolus vulgaris (Kidney bean).